Reading from the N-terminus, the 159-residue chain is Odorant-binding protein (159 aa).

The protein belongs to the calycin superfamily. Lipocalin family. In terms of assembly, homodimer.

Its subcellular location is the secreted. Its function is as follows. This protein binds a wide variety of chemical odorants. This chain is Odorant-binding protein, found in Bos taurus (Bovine).